A 529-amino-acid chain; its full sequence is Bifunctional purine biosynthesis protein PurH (529 aa).

Residues 1–148 form the MGS-like domain; sequence MQQRRPVRRA…KNHKDVAIVV (148 aa). Lys-287 carries the post-translational modification N6-acetyllysine.

It belongs to the PurH family.

It catalyses the reaction (6R)-10-formyltetrahydrofolate + 5-amino-1-(5-phospho-beta-D-ribosyl)imidazole-4-carboxamide = 5-formamido-1-(5-phospho-D-ribosyl)imidazole-4-carboxamide + (6S)-5,6,7,8-tetrahydrofolate. The catalysed reaction is IMP + H2O = 5-formamido-1-(5-phospho-D-ribosyl)imidazole-4-carboxamide. It functions in the pathway purine metabolism; IMP biosynthesis via de novo pathway; 5-formamido-1-(5-phospho-D-ribosyl)imidazole-4-carboxamide from 5-amino-1-(5-phospho-D-ribosyl)imidazole-4-carboxamide (10-formyl THF route): step 1/1. It participates in purine metabolism; IMP biosynthesis via de novo pathway; IMP from 5-formamido-1-(5-phospho-D-ribosyl)imidazole-4-carboxamide: step 1/1. In Escherichia coli O17:K52:H18 (strain UMN026 / ExPEC), this protein is Bifunctional purine biosynthesis protein PurH.